Consider the following 286-residue polypeptide: Undecaprenyl-diphosphatase (286 aa).

Helical transmembrane passes span F43 to F63, L91 to G111, I118 to F138, M150 to G170, A189 to Y209, I236 to F256, and G264 to L284.

It belongs to the UppP family.

It is found in the cell inner membrane. The catalysed reaction is di-trans,octa-cis-undecaprenyl diphosphate + H2O = di-trans,octa-cis-undecaprenyl phosphate + phosphate + H(+). Functionally, catalyzes the dephosphorylation of undecaprenyl diphosphate (UPP). Confers resistance to bacitracin. This chain is Undecaprenyl-diphosphatase, found in Koribacter versatilis (strain Ellin345).